The following is a 119-amino-acid chain: Anther-specific protein BCP1 (119 aa).

The first 23 residues, 1-23, serve as a signal peptide directing secretion; it reads MGRQNVVVVFGLVFLAVLGLAAA. Residues 24–42 show a composition bias toward low complexity; the sequence is ASSPSPSASPSKAPSTSTP. The segment at 24 to 95 is disordered; sequence ASSPSPSASP…PSGSADSADS (72 aa). The Extracellular segment spans residues 24–98; that stretch reads ASSPSPSASP…SADSADSGAA (75 aa). Acidic residues predominate over residues 56–69; that stretch reads TDDDAAASPGDDDV. The span at 82–95 shows a compositional bias: low complexity; sequence GSNGPSGSADSADS. A helical transmembrane segment spans residues 99 to 118; it reads ALGVSAVVVGVTSIVGSFLF. Residue Phe-119 is a topological domain, cytoplasmic.

As to expression, expressed in mature pollen grains, developing microspores and tapetal cells.

The protein resides in the membrane. Its function is as follows. Required for pollen fertility and development. Active in both diploid tapetum and haploid microspores. Major pollen protein. The protein is Anther-specific protein BCP1 (BCP1) of Brassica campestris (Field mustard).